Consider the following 367-residue polypeptide: Inositol-3-phosphate synthase (367 aa).

NAD(+) is bound by residues Asp-78, Ala-137, Tyr-157, Ser-200, Asp-235, and Lys-248.

The protein belongs to the myo-inositol 1-phosphate synthase family. The cofactor is NAD(+).

The enzyme catalyses D-glucose 6-phosphate = 1D-myo-inositol 3-phosphate. In terms of biological role, key enzyme in myo-inositol biosynthesis pathway that catalyzes the conversion of glucose 6-phosphate to 1D-myo-inositol 3-phosphate in a NAD-dependent manner. The sequence is that of Inositol-3-phosphate synthase (ino1) from Mycobacterium tuberculosis (strain CDC 1551 / Oshkosh).